Here is a 628-residue protein sequence, read N- to C-terminus: Modular serine protease (628 aa).

A signal peptide spans 1–25; it reads MQLISFLSNPLFFCALLLKFRTIFA. LDL-receptor class A domains lie at 26 to 64, 69 to 107, 122 to 163, and 166 to 204; these read ACDSSQFECDNGSCISQYDVCNGEKNCPDGSDETALTCV, HCTKPYFQCTYGACVIGTAGCNGVNECADGSDETRLRCG, NCKE…ELCG, and ECPAYSFKCGTGGCISGSLSCNGENDCYDGSDEAPLLCN. Disulfide bonds link C27–C39, C34–C52, C46–C63, C70–C82, C77–C95, C89–C106, C123–C135, C130–C149, C143–C162, C167–C179, C174–C192, and C186–C203. N-linked (GlcNAc...) asparagine glycosylation is present at N36. N204 is a glycosylation site (N-linked (GlcNAc...) asparagine). 2 consecutive Sushi domains span residues 222–285 and 300–356; these read LGCP…KCVK and ALCT…RCEQ. Disulfide bonds link C224/C270, C256/C283, C302/C341, and C326/C354. In terms of domain architecture, Peptidase S1 spans 369–621; sequence SSGGYTINNT…FEDMILNAMN (253 aa). N-linked (GlcNAc...) asparagine glycosylation is present at N376. C399 and C415 are oxidised to a cystine. Active-site charge relay system residues include H414, D472, and S563. Residue N621 is glycosylated (N-linked (GlcNAc...) asparagine).

Belongs to the peptidase S1 family. May be proteolytically cleaved via an autocatalytic mechanism.

The protein localises to the secreted. Its function is as follows. Serine protease that plays a key role in innate immunity by activating the Toll pathway in response to infection with Gram-positive bacteria and fungi. During Gram-positive infection, acts downstream of PGRP-SA and upstream of Grass and Spz, and therefore appears to function in a pathway that links detection of Gram-positive lysine-type peptidoglycans to Toll activation. Functions in a separate pathway to the psh-mediated activation of the Toll pathway. This is Modular serine protease from Drosophila melanogaster (Fruit fly).